The sequence spans 324 residues: Integrin-binding sialoprotein (324 aa).

The signal sequence occupies residues 1 to 16; that stretch reads MKTALILLSILGMACA. Residues S31, S67, S75, S76, and S95 each carry the phosphoserine modification. Disordered stretches follow at residues 60 to 228 and 243 to 263; these read VQGG…GREL and QQTTPPPEAYGTTSPPIRKSS. Positions 66–105 are enriched in acidic residues; it reads SSEENGDGDSSEEEGEEEETSNEEENNEDSEGNEDQEAEA. The segment covering 106–130 has biased composition (polar residues); that stretch reads ENSTLSTLSGVTASYGAETTPQAQT. Residue N107 is glycosylated (N-linked (GlcNAc...) asparagine). A compositionally biased stretch (basic and acidic residues) spans 141-154; it reads KAGDAESRAPKVKE. Position 155 is a phosphoserine (S155). Residues 155-179 show a composition bias toward acidic residues; that stretch reads SDEEEEEEEEEEENENEEAEVDENE. N-linked (GlcNAc...) asparagine glycosylation is found at N183, N188, and N196. Positions 203–213 are enriched in acidic residues; the sequence is NGEEAEAEEAS. Residues 253-263 show a composition bias toward polar residues; that stretch reads GTTSPPIRKSS. Residues 293 to 295 carry the Integrin-binding motif motif; the sequence is RGD. 2 positions are modified to sulfotyrosine: Y320 and Y321.

In terms of assembly, monomer. Interacts with integrins; the interaction promotes cell adhesion.

It localises to the secreted. In terms of biological role, binds tightly to hydroxyapatite. Appears to form an integral part of the mineralized matrix. Probably important to cell-matrix interaction. Promotes adhesion and migration of various cells via the alpha-V/beta-3 integrin receptor (ITGAV:ITGB3). The sequence is that of Integrin-binding sialoprotein (Ibsp) from Mus musculus (Mouse).